The sequence spans 80 residues: Defensin-like protein 50 (80 aa).

Residues Met-1–Ala-27 form the signal peptide. 4 cysteine pairs are disulfide-bonded: Cys-39–Cys-79, Cys-43–Cys-66, Cys-52–Cys-77, and Cys-56–Cys-78.

It belongs to the DEFL family.

It localises to the secreted. The sequence is that of Defensin-like protein 50 (LCR49) from Arabidopsis thaliana (Mouse-ear cress).